The following is a 576-amino-acid chain: Rop guanine nucleotide exchange factor 13 (576 aa).

A PRONE domain is found at 119–485 (KSCYFAYVTE…QLTQNPELAM (367 aa)). Residues 557 to 570 (KTTYLESLGTTRSP) show a composition bias toward polar residues. The disordered stretch occupies residues 557–576 (KTTYLESLGTTRSPTAGRYS).

Interacts with PRK6. As to expression, specifically expressed in mature flowers.

Its function is as follows. Guanine-nucleotide exchange factor (GEF) that acts as an activator of Rop (Rho of plants) GTPases by promoting the exchange of GDP for GTP. The sequence is that of Rop guanine nucleotide exchange factor 13 from Arabidopsis thaliana (Mouse-ear cress).